Consider the following 67-residue polypeptide: Ubiquinol-cytochrome c reductase complex assembly factor 6 (67 aa).

Over 1–8 (MPGGVPWS) the chain is Mitochondrial matrix. Residues 9–25 (AYLKMLSSSLLAMCAGA) form a helical; Signal-anchor for type II membrane protein membrane-spanning segment. Over 26–67 (QVVHWYYRPDLTIPEIPPKPGELKTELLGLKERRHEPHVSQQ) the chain is Mitochondrial intermembrane.

The protein belongs to the UQCC6 family. Interacts with UQCRC1. Interacts with UQCRQ. Interacts with UQCC5. Forms a complex, named COMB/coordinator of mitochondrial CYTB biogenesis, composed of UQCC1, UQCC2, UQCC4, UQCC5 and UQCC6; stabilizes nascent cytochrome b/MT-CYB and promotes its membrane insertion. Forms a complex, named COMA, composed of UQCC1, UQCC2 and UQCC4; activates MT-CYB translation. Forms a complex, named COMC, composed of UQCC1, UQCC2; UQCC3 and UQCC4; mediates MT-CYB hemylation and association with the first nuclear-encoded complex III subunit UQCRQ. Interacts with MT-CYB. Highly expressed in brown adipose, cardiac and skeletal muscle (at protein level).

Its subcellular location is the mitochondrion inner membrane. Functionally, required for the assembly and stability of the mitochondrial ubiquinol-cytochrome c reductase complex (complex III or cytochrome b-c1 complex), a multisubunit transmembrane complex that is part of the mitochondrial electron transport chain (ETC) which drives oxidative phosphorylation. Mediates early complex III biogenesis. Participates in regulating the levels of electron transport chain proteins, and therefore energy supply, in response to changes in energy demand. Also required for cytochrome c oxidase complex (complex IV) assembly. This is Ubiquinol-cytochrome c reductase complex assembly factor 6 from Mus musculus (Mouse).